The following is a 317-amino-acid chain: Protein translocase subunit SecF (317 aa).

6 helical membrane-spanning segments follow: residues 11–31, 135–155, 166–186, 197–217, 244–266, and 276–298; these read FYLL…LFGL, RSIV…AFAF, ICAI…FAIL, LFVT…IVVF, LVRS…FFGG, and LLIG…LVSW.

The protein belongs to the SecD/SecF family. SecF subfamily. As to quaternary structure, forms a complex with SecD. Part of the essential Sec protein translocation apparatus which comprises SecA, SecYEG and auxiliary proteins SecDF. Other proteins may also be involved.

The protein localises to the cell membrane. Functionally, part of the Sec protein translocase complex. Interacts with the SecYEG preprotein conducting channel. SecDF uses the proton motive force (PMF) to complete protein translocation after the ATP-dependent function of SecA. This chain is Protein translocase subunit SecF, found in Thermobaculum terrenum (strain ATCC BAA-798 / CCMEE 7001 / YNP1).